The primary structure comprises 1025 residues: Multidrug resistance protein MdtC (1025 aa).

The next 12 helical transmembrane spans lie at 3–23 (FFALFIYRPVATILIAVAITL), 333–353 (EVEQTLVISIALVILVVFLFL), 360–380 (LIPAVAVPVSLIGTFAAMYLC), 387–407 (LSLMALTIATGFVVDDAIVVL), 431–451 (VGFTVLSMSVSLVAVFLPLLL), 463–483 (FAVTLSVAIGISLVISLTLTP), 528–548 (IVGLVLVGTIALNVWMYITIP), 853–873 (VILILAAIATVYIVLGILYES), 875–895 (VHPLTILSTLPSAGVGALLAL), 897–917 (LFDAPFSLIALIGIMLLIGIV), 953–973 (PIMMTTLAALFGALPLVISSG), and 984–1004 (ITIVGGLAMSQLLTLYTTPVV).

It belongs to the resistance-nodulation-cell division (RND) (TC 2.A.6) family. MdtC subfamily. As to quaternary structure, part of a tripartite efflux system composed of MdtA, MdtB and MdtC. MdtC forms a heteromultimer with MdtB.

Its subcellular location is the cell inner membrane. This chain is Multidrug resistance protein MdtC, found in Enterobacter sp. (strain 638).